Here is a 147-residue protein sequence, read N- to C-terminus: Ubiquitin-conjugating enzyme E2 D1 (147 aa).

Positions 1–147 (MALKRIQKEL…AREWTQKYAM (147 aa)) constitute a UBC core domain. Cys-85 acts as the Glycyl thioester intermediate in catalysis.

The protein belongs to the ubiquitin-conjugating enzyme family. In terms of assembly, component of a E3 ubiquitin ligase complex containing UBE2D1, SIAH1, CACYBP/SIP, SKP1, APC and TBL1X. Interacts with RNF11. Autoubiquitinated.

Its subcellular location is the cytoplasm. The catalysed reaction is S-ubiquitinyl-[E1 ubiquitin-activating enzyme]-L-cysteine + [E2 ubiquitin-conjugating enzyme]-L-cysteine = [E1 ubiquitin-activating enzyme]-L-cysteine + S-ubiquitinyl-[E2 ubiquitin-conjugating enzyme]-L-cysteine.. It carries out the reaction S-ubiquitinyl-[E1 ubiquitin-activating enzyme]-L-cysteine + [acceptor protein]-L-lysine = [E1 ubiquitin-activating enzyme]-L-cysteine + N(6)-monoubiquitinyl-[acceptor protein]-L-lysine.. Its pathway is protein modification; protein ubiquitination. In terms of biological role, accepts ubiquitin from the E1 complex and catalyzes its covalent attachment to other proteins. In vitro catalyzes 'Lys-48'-linked polyubiquitination. Mediates the selective degradation of short-lived and abnormal proteins. Functions in the E6/E6-AP-induced ubiquitination of p53/TP53. Mediates ubiquitination of PEX5 and auto-ubiquitination of STUB1, TRAF6 and TRIM63/MURF1. Ubiquitinates STUB1-associated HSP90AB1 in vitro. Lacks inherent specificity for any particular lysine residue of ubiquitin. Essential for viral activation of IRF3. Mediates polyubiquitination of CYP3A4. This chain is Ubiquitin-conjugating enzyme E2 D1 (UBE2D1), found in Bos taurus (Bovine).